The chain runs to 419 residues: Serine hydroxymethyltransferase (419 aa).

Residues L121 and 125–127 (GHL) each bind (6S)-5,6,7,8-tetrahydrofolate. An N6-(pyridoxal phosphate)lysine modification is found at K230. Residue 355 to 357 (SPF) participates in (6S)-5,6,7,8-tetrahydrofolate binding.

Belongs to the SHMT family. Homodimer. Requires pyridoxal 5'-phosphate as cofactor.

Its subcellular location is the cytoplasm. The enzyme catalyses (6R)-5,10-methylene-5,6,7,8-tetrahydrofolate + glycine + H2O = (6S)-5,6,7,8-tetrahydrofolate + L-serine. It participates in one-carbon metabolism; tetrahydrofolate interconversion. The protein operates within amino-acid biosynthesis; glycine biosynthesis; glycine from L-serine: step 1/1. Its function is as follows. Catalyzes the reversible interconversion of serine and glycine with tetrahydrofolate (THF) serving as the one-carbon carrier. This reaction serves as the major source of one-carbon groups required for the biosynthesis of purines, thymidylate, methionine, and other important biomolecules. Also exhibits THF-independent aldolase activity toward beta-hydroxyamino acids, producing glycine and aldehydes, via a retro-aldol mechanism. This is Serine hydroxymethyltransferase from Streptococcus equi subsp. equi (strain 4047).